The chain runs to 648 residues: NAD(P)H-quinone oxidoreductase subunit 5, chloroplastic (648 aa).

16 helical membrane passes run 7–27 (AIWL…IGLL), 39–59 (LHGA…LGVL), 89–109 (VDPL…LVMI), 124–144 (FFVY…SPNL), 147–167 (VYGF…FWFT), 189–209 (LLLG…ASIA), 215–235 (LLIA…LVFM), 258–278 (TPIS…FLVA), 289–309 (LVME…ATMA), 327–347 (LGYM…FHLT), 354–374 (ALLF…VGFS), 395–415 (AMTF…ACFW), 432–452 (WLIA…IYFL), 472–492 (LGMV…GSLG), 518–538 (LAEF…GISL), and 625–645 (FYIL…TTHL).

Belongs to the complex I subunit 5 family. NDH is composed of at least 16 different subunits, 5 of which are encoded in the nucleus.

The protein resides in the plastid. It localises to the chloroplast thylakoid membrane. It carries out the reaction a plastoquinone + NADH + (n+1) H(+)(in) = a plastoquinol + NAD(+) + n H(+)(out). The catalysed reaction is a plastoquinone + NADPH + (n+1) H(+)(in) = a plastoquinol + NADP(+) + n H(+)(out). In terms of biological role, NDH shuttles electrons from NAD(P)H:plastoquinone, via FMN and iron-sulfur (Fe-S) centers, to quinones in the photosynthetic chain and possibly in a chloroplast respiratory chain. The immediate electron acceptor for the enzyme in this species is believed to be plastoquinone. Couples the redox reaction to proton translocation, and thus conserves the redox energy in a proton gradient. The protein is NAD(P)H-quinone oxidoreductase subunit 5, chloroplastic (ndhF) of Nephroselmis olivacea (Green alga).